A 26-amino-acid polypeptide reads, in one-letter code: Acetyl-CoA acetyltransferase (26 aa).

The active-site Acyl-thioester intermediate is C21.

The protein belongs to the thiolase-like superfamily. Thiolase family. As to quaternary structure, homotetramer. Post-translationally, succinylation, adjacent to a coenzyme A binding site. Desuccinylated by SIRT5.

It localises to the mitochondrion. The enzyme catalyses 2 acetyl-CoA = acetoacetyl-CoA + CoA. This is Acetyl-CoA acetyltransferase from Sus scrofa (Pig).